Consider the following 661-residue polypeptide: Threonine--tRNA ligase (661 aa).

Positions 1–64 constitute a TGS domain; that stretch reads MSQAISLTFP…TTGRIEIITR (64 aa). The segment at 245–546 is catalytic; that stretch reads DHRRLGREMD…LIENFAGHMP (302 aa). Residues Cys341, His392, and His523 each coordinate Zn(2+).

This sequence belongs to the class-II aminoacyl-tRNA synthetase family. In terms of assembly, homodimer. It depends on Zn(2+) as a cofactor.

It is found in the cytoplasm. It carries out the reaction tRNA(Thr) + L-threonine + ATP = L-threonyl-tRNA(Thr) + AMP + diphosphate + H(+). In terms of biological role, catalyzes the attachment of threonine to tRNA(Thr) in a two-step reaction: L-threonine is first activated by ATP to form Thr-AMP and then transferred to the acceptor end of tRNA(Thr). Also edits incorrectly charged L-seryl-tRNA(Thr). In Rhizobium johnstonii (strain DSM 114642 / LMG 32736 / 3841) (Rhizobium leguminosarum bv. viciae), this protein is Threonine--tRNA ligase.